We begin with the raw amino-acid sequence, 428 residues long: Histidinol dehydrogenase (428 aa).

Positions 124, 186, and 209 each coordinate NAD(+). Substrate-binding residues include S233, Q255, and H258. The Zn(2+) site is built by Q255 and H258. Active-site proton acceptor residues include E322 and H323. The substrate site is built by H323, D356, E410, and H415. D356 provides a ligand contact to Zn(2+). H415 is a binding site for Zn(2+).

This sequence belongs to the histidinol dehydrogenase family. It depends on Zn(2+) as a cofactor.

The catalysed reaction is L-histidinol + 2 NAD(+) + H2O = L-histidine + 2 NADH + 3 H(+). The protein operates within amino-acid biosynthesis; L-histidine biosynthesis; L-histidine from 5-phospho-alpha-D-ribose 1-diphosphate: step 9/9. Functionally, catalyzes the sequential NAD-dependent oxidations of L-histidinol to L-histidinaldehyde and then to L-histidine. In Bacteroides fragilis (strain YCH46), this protein is Histidinol dehydrogenase.